Here is a 261-residue protein sequence, read N- to C-terminus: Histone H3-like centromeric protein cpar-1 (261 aa).

The interval 80 to 150 is disordered; sequence TVGSNSTNLV…AGSSSSDRVR (71 aa). Polar residues predominate over residues 113–127; sequence AANSHHQSPINVGNR. Low complexity predominate over residues 132 to 146; sequence GTNGRNGSRAGSSSS. The interval 164–261 is H3-like; that stretch reads YRPGQKALEE…LYRRLCLPNL (98 aa).

Belongs to the histone H3 family. In terms of assembly, forms a nucleosome-like histone octamer containing two molecules each of H2A, H2B, cpar-1 and H4 assembled in one cpar-1-H4 heterotetramer and two H2A-H2B heterodimers. Post-translationally, cleaved at the onset of meiotic anaphase I, likely by separase sep-1.

The protein localises to the nucleus. The protein resides in the chromosome. In terms of biological role, histone H3-like variant which exclusively replaces conventional H3 in the nucleosome core of centromeric chromatin at the inner plate of the kinetochore. Required for recruitment and assembly of kinetochore proteins, mitotic progression and chromosome segregation. May serve as an epigenetic mark that propagates centromere identity through replication and cell division. Not required for chromosome segregation during meiosis. This chain is Histone H3-like centromeric protein cpar-1, found in Caenorhabditis elegans.